Consider the following 341-residue polypeptide: S-adenosylmethionine:tRNA ribosyltransferase-isomerase (341 aa).

This sequence belongs to the QueA family. Monomer.

The protein resides in the cytoplasm. The enzyme catalyses 7-aminomethyl-7-carbaguanosine(34) in tRNA + S-adenosyl-L-methionine = epoxyqueuosine(34) in tRNA + adenine + L-methionine + 2 H(+). Its pathway is tRNA modification; tRNA-queuosine biosynthesis. In terms of biological role, transfers and isomerizes the ribose moiety from AdoMet to the 7-aminomethyl group of 7-deazaguanine (preQ1-tRNA) to give epoxyqueuosine (oQ-tRNA). The chain is S-adenosylmethionine:tRNA ribosyltransferase-isomerase from Staphylococcus haemolyticus (strain JCSC1435).